The primary structure comprises 477 residues: MSPKTETKASVGFKAGVKDYKLTYYTPDYETKSTDILAAFRVTPQPGVPPEEAGAAVAAESSTGTWTTVWTDGLTSLDRYKGRCYHIEPVAGEESQFIAYVAYPLDLFEEGSVTNMFTSIVGNVFGFKALRALRLEDLRIPPAYSKTFQGPPHGIQVERDKLNKYGRPLLGCTIKPKLGLSAKNYGRAVYECLRGGLDFTKDDENVNSQPFMRWRDRFLFCAEAIYKSQAETGEIKGHYLNATAGTCEEMIKRAVFARELGVPIVMHDYLTGGFTANTTLAHYCRDNGLLLHIHRAMHAVIDRQKNHGMHFRVLAKALRMSGGDHIHAGTVVGKLEGERDITLGFVDLLRDDFIEKDRSRGIYFTQDWVSMPGVLPVASGGIHVWHMPALTEIFGDDSVLQFGGGTLGQPWGNAPRAVANRVALEACVQARNEGRDLAREGNEIIREASKWSPELAAACEVWKEIKFEFAEWIPCNQ.

The propeptide occupies 1–2; sequence MS. At Pro-3 the chain carries N-acetylproline. An N6,N6,N6-trimethyllysine modification is found at Lys-14. Substrate is bound by residues Asn-123 and Thr-173. The Proton acceptor role is filled by Lys-175. Residue Lys-177 participates in substrate binding. Positions 201, 203, and 204 each coordinate Mg(2+). Lys-201 is modified (N6-carboxylysine). The Proton acceptor role is filled by His-294. Substrate-binding residues include Arg-295, His-327, and Ser-379.

Belongs to the RuBisCO large chain family. Type I subfamily. Heterohexadecamer of 8 large chains and 8 small chains; disulfide-linked. The disulfide link is formed within the large subunit homodimers. The cofactor is Mg(2+). The disulfide bond which can form in the large chain dimeric partners within the hexadecamer appears to be associated with oxidative stress and protein turnover.

It is found in the plastid. It localises to the chloroplast. The catalysed reaction is 2 (2R)-3-phosphoglycerate + 2 H(+) = D-ribulose 1,5-bisphosphate + CO2 + H2O. It catalyses the reaction D-ribulose 1,5-bisphosphate + O2 = 2-phosphoglycolate + (2R)-3-phosphoglycerate + 2 H(+). Functionally, ruBisCO catalyzes two reactions: the carboxylation of D-ribulose 1,5-bisphosphate, the primary event in carbon dioxide fixation, as well as the oxidative fragmentation of the pentose substrate in the photorespiration process. Both reactions occur simultaneously and in competition at the same active site. In Persea americana (Avocado), this protein is Ribulose bisphosphate carboxylase large chain.